The primary structure comprises 208 residues: Ribosomal RNA large subunit methyltransferase E (208 aa).

S-adenosyl-L-methionine is bound by residues Gly-63, Trp-65, Asp-83, Asp-99, and Asp-124. The active-site Proton acceptor is Lys-164.

It belongs to the class I-like SAM-binding methyltransferase superfamily. RNA methyltransferase RlmE family.

Its subcellular location is the cytoplasm. The enzyme catalyses uridine(2552) in 23S rRNA + S-adenosyl-L-methionine = 2'-O-methyluridine(2552) in 23S rRNA + S-adenosyl-L-homocysteine + H(+). In terms of biological role, specifically methylates the uridine in position 2552 of 23S rRNA at the 2'-O position of the ribose in the fully assembled 50S ribosomal subunit. The chain is Ribosomal RNA large subunit methyltransferase E from Blochmanniella pennsylvanica (strain BPEN).